Consider the following 509-residue polypeptide: Lysophospholipid acyltransferase (509 aa).

The Lumenal segment spans residues 1-14 (MAYLIDIPFEYFSS). Residues 15–35 (FLGVHPDQLKLLFCFLSAYPF) traverse the membrane as a helical segment. The Cytoplasmic segment spans residues 36–55 (AGILKRLPSAPWIRNLFSIS). A helical membrane pass occupies residues 56 to 76 (IGLFYLIGVHHLYDGVLVLLF). The Lumenal portion of the chain corresponds to 77-94 (DALFTYFVAAFYRSSRMP). A helical membrane pass occupies residues 95–115 (WIIFIVILGHTFSSHVIRYIY). Over 116 to 223 (PSENTDITAS…LEPALGRCWR (108 aa)) the chain is Cytoplasmic. Residues 224 to 244 (GLLWLILFITGSSIYPLKFLL) form a helical membrane-spanning segment. At 245 to 246 (TP) the chain is on the lumenal side. A helical transmembrane segment spans residues 247-267 (KFASSPILLKYGYVCITAFVA). Topologically, residues 268 to 410 (RMKYYGAWEL…TPGPFKRVYD (143 aa)) are cytoplasmic. The active site involves H363. The helical transmembrane segment at 411–431 (VIGMVATNLSLSYLIISFLLL) threads the bilayer. Residues 432 to 441 (NLKESIHVWK) are Lumenal-facing. A helical membrane pass occupies residues 442–462 (ELYFIVHIYILIALAVFNSPI). Residues 463-509 (RSKLDNKIRSRVNSYKLKSYEQSMKSTSDTDMLNMSVPKREDFENDE) lie on the Cytoplasmic side of the membrane. Residues 488–509 (STSDTDMLNMSVPKREDFENDE) are disordered. The residue at position 490 (S490) is a Phosphoserine. Residues 500–509 (PKREDFENDE) are compositionally biased toward basic and acidic residues.

It belongs to the membrane-bound acyltransferase family.

The protein resides in the endoplasmic reticulum membrane. Its subcellular location is the microsome membrane. It catalyses the reaction a 1-acyl-sn-glycero-3-phosphate + an acyl-CoA = a 1,2-diacyl-sn-glycero-3-phosphate + CoA. The enzyme catalyses a 1-acyl-sn-glycero-3-phosphocholine + an acyl-CoA = a 1,2-diacyl-sn-glycero-3-phosphocholine + CoA. It carries out the reaction a 1-acyl-sn-glycero-3-phosphoethanolamine + an acyl-CoA = a 1,2-diacyl-sn-glycero-3-phosphoethanolamine + CoA. Its function is as follows. Membrane-bound O-acyltransferase that mediates the incorporation of unsaturated acyl chains into the sn-2 position of phospholipids. This chain is Lysophospholipid acyltransferase (ale1), found in Schizosaccharomyces pombe (strain 972 / ATCC 24843) (Fission yeast).